Reading from the N-terminus, the 652-residue chain is Acetyl-coenzyme A synthetase (652 aa).

Residues 189–192 (RGGK) and Ser311 contribute to the CoA site. ATP is bound by residues 387 to 389 (GEP), 411 to 416 (DTWWQT), Asp500, and Arg515. Ser523 serves as a coordination point for CoA. Residue Arg526 participates in ATP binding. Mg(2+) is bound by residues Val537, His539, and Ile542. Residue Lys584 participates in CoA binding. The residue at position 609 (Lys609) is an N6-acetyllysine.

The protein belongs to the ATP-dependent AMP-binding enzyme family. The cofactor is Mg(2+). Post-translationally, acetylated. Deacetylation by the SIR2-homolog deacetylase activates the enzyme.

It carries out the reaction acetate + ATP + CoA = acetyl-CoA + AMP + diphosphate. Its function is as follows. Catalyzes the conversion of acetate into acetyl-CoA (AcCoA), an essential intermediate at the junction of anabolic and catabolic pathways. AcsA undergoes a two-step reaction. In the first half reaction, AcsA combines acetate with ATP to form acetyl-adenylate (AcAMP) intermediate. In the second half reaction, it can then transfer the acetyl group from AcAMP to the sulfhydryl group of CoA, forming the product AcCoA. The polypeptide is Acetyl-coenzyme A synthetase (Bartonella quintana (strain Toulouse) (Rochalimaea quintana)).